A 273-amino-acid chain; its full sequence is Cytochrome b-c1 complex subunit Rieske, mitochondrial (273 aa).

A mitochondrion-targeting transit peptide spans Met1–Ser61. Residues Pro25–Arg46 are disordered. At Ser62–Arg110 the chain is on the mitochondrial matrix side. The chain crosses the membrane as a helical span at residues Ala111 to Leu133. Residues Lys134–Gly273 are Mitochondrial intermembrane-facing. The 96-residue stretch at Arg176–Leu271 folds into the Rieske domain. 4 residues coordinate [2Fe-2S] cluster: Cys216, His218, Cys235, and His238. Cys221 and Cys237 are oxidised to a cystine.

This sequence belongs to the Rieske iron-sulfur protein family. Component of the ubiquinol-cytochrome c oxidoreductase (cytochrome b-c1 complex, complex III, CIII), a multisubunit enzyme composed of 3 respiratory subunits cytochrome b, cytochrome c1 and Rieske protein, 2 core protein subunits, and several low-molecular weight protein subunits. The complex exists as an obligatory dimer and forms supercomplexes (SCs) in the inner mitochondrial membrane with cytochrome c oxidase (complex IV, CIV). The cofactor is [2Fe-2S] cluster.

It is found in the mitochondrion inner membrane. The catalysed reaction is a quinol + 2 Fe(III)-[cytochrome c](out) = a quinone + 2 Fe(II)-[cytochrome c](out) + 2 H(+)(out). Component of the ubiquinol-cytochrome c oxidoreductase, a multisubunit transmembrane complex that is part of the mitochondrial electron transport chain which drives oxidative phosphorylation. The respiratory chain contains 3 multisubunit complexes succinate dehydrogenase (complex II, CII), ubiquinol-cytochrome c oxidoreductase (cytochrome b-c1 complex, complex III, CIII) and cytochrome c oxidase (complex IV, CIV), that cooperate to transfer electrons derived from NADH and succinate to molecular oxygen, creating an electrochemical gradient over the inner membrane that drives transmembrane transport and the ATP synthase. The cytochrome b-c1 complex catalyzes electron transfer from ubiquinol to cytochrome c, linking this redox reaction to translocation of protons across the mitochondrial inner membrane, with protons being carried across the membrane as hydrogens on the quinol. In the process called Q cycle, 2 protons are consumed from the matrix, 4 protons are released into the intermembrane space and 2 electrons are passed to cytochrome c. The Rieske protein is a catalytic core subunit containing a [2Fe-2S] iron-sulfur cluster. It cycles between 2 conformational states during catalysis to transfer electrons from the quinol bound in the Q(0) site in cytochrome b to cytochrome c1. This chain is Cytochrome b-c1 complex subunit Rieske, mitochondrial, found in Zea mays (Maize).